Consider the following 339-residue polypeptide: tRNA N6-adenosine threonylcarbamoyltransferase (339 aa).

Histidine 117 and histidine 121 together coordinate Fe cation. Residues 140-144 (VVSGG), aspartate 173, glycine 186, and asparagine 279 contribute to the substrate site. Aspartate 307 provides a ligand contact to Fe cation.

Belongs to the KAE1 / TsaD family. It depends on Fe(2+) as a cofactor.

The protein resides in the cytoplasm. It carries out the reaction L-threonylcarbamoyladenylate + adenosine(37) in tRNA = N(6)-L-threonylcarbamoyladenosine(37) in tRNA + AMP + H(+). Functionally, required for the formation of a threonylcarbamoyl group on adenosine at position 37 (t(6)A37) in tRNAs that read codons beginning with adenine. Is involved in the transfer of the threonylcarbamoyl moiety of threonylcarbamoyl-AMP (TC-AMP) to the N6 group of A37, together with TsaE and TsaB. TsaD likely plays a direct catalytic role in this reaction. This is tRNA N6-adenosine threonylcarbamoyltransferase from Syntrophomonas wolfei subsp. wolfei (strain DSM 2245B / Goettingen).